A 388-amino-acid chain; its full sequence is Galactokinase (388 aa).

Residue 32–35 (EHTD) participates in substrate binding. Residues Ser-66 and 123-129 (GASLSSS) contribute to the ATP site. Residues Ser-129 and Glu-161 each coordinate Mg(2+). Asp-173 serves as the catalytic Proton acceptor. A substrate-binding site is contributed by Tyr-223.

This sequence belongs to the GHMP kinase family. GalK subfamily.

It is found in the cytoplasm. It carries out the reaction alpha-D-galactose + ATP = alpha-D-galactose 1-phosphate + ADP + H(+). It participates in carbohydrate metabolism; galactose metabolism. In terms of biological role, catalyzes the transfer of the gamma-phosphate of ATP to D-galactose to form alpha-D-galactose-1-phosphate (Gal-1-P). This Staphylococcus carnosus (strain TM300) protein is Galactokinase.